The following is a 96-amino-acid chain: uncharacterized protein (96 aa).

2 helical membrane passes run 27-47 and 50-70; these read LAFR…ALLI and LSGV…SIVF.

Its subcellular location is the cell membrane. This is an uncharacterized protein from Haemophilus influenzae (strain ATCC 51907 / DSM 11121 / KW20 / Rd).